Consider the following 443-residue polypeptide: Glutamate--tRNA ligase 2 (443 aa).

A 'HIGH' region motif is present at residues 7 to 17; it reads PSPTGYLHVGN. Residues 236-240 carry the 'KMSKS' region motif; it reads KISKR. ATP is bound at residue lysine 239.

This sequence belongs to the class-I aminoacyl-tRNA synthetase family. Glutamate--tRNA ligase type 1 subfamily. Monomer.

Its subcellular location is the cytoplasm. The catalysed reaction is tRNA(Glu) + L-glutamate + ATP = L-glutamyl-tRNA(Glu) + AMP + diphosphate. Its function is as follows. Catalyzes the attachment of glutamate to tRNA(Glu) in a two-step reaction: glutamate is first activated by ATP to form Glu-AMP and then transferred to the acceptor end of tRNA(Glu). In Ehrlichia canis (strain Jake), this protein is Glutamate--tRNA ligase 2.